The sequence spans 219 residues: Large ribosomal subunit protein uL3 (219 aa).

It belongs to the universal ribosomal protein uL3 family. In terms of assembly, part of the 50S ribosomal subunit. Forms a cluster with proteins L14 and L19.

Functionally, one of the primary rRNA binding proteins, it binds directly near the 3'-end of the 23S rRNA, where it nucleates assembly of the 50S subunit. The sequence is that of Large ribosomal subunit protein uL3 from Salinispora arenicola (strain CNS-205).